The sequence spans 81 residues: Putative truncated GMC-type inactive oxidoreductase R833 (81 aa).

The protein belongs to the GMC oxidoreductase family.

This Acanthamoeba polyphaga mimivirus (APMV) protein is Putative truncated GMC-type inactive oxidoreductase R833.